The primary structure comprises 500 residues: MSSPLSQAFAQNFLGHSPRWYKLTVLAFLLLNPLLLWLAGPVTSAWVLVGEFIFTLAMALKCYPLQPGGLLVLEALLLGLATPEALYAELQHNFPVLLLLMFMVAGIYFMKDLLLLLFSRLLLGVRSKALLSLLFCLLAALLSAFLDALTVTAVVISVAVAFFAVYHRVASGQRASEDYDPATDRQVPELHRAHLEEFRAFLRSLLMHAAVGTALGGVCTLVGEPQNLLIGHEAGWHFVEFFRQVAPVSMPVLAAGLLTCVLLEKSRRFGYGAQLPAAVRQVLAEYAASESRKRGAQQKAALLVQALAALVLIVGLALHVAEVGLIGLLVIVLITAFTGVTDEHQIGRAFQEALPFTALLVVFFAVVAVIHQQHLFTPIIQAVLALPAERQPGMLFIANGLLSAISDNVFVATIYITEVKQALDAGHMSREHFDTLAVAINTGTNLPSVATPNGQAAFLFLLTSSIAPLVRLSYGRMVWMALPYTLVMGGLGWWAVSHWL.

12 helical membrane-spanning segments follow: residues 28–50, 68–88, 98–118, 121–141, 145–165, 205–225, 244–264, 311–331, 350–370, 394–414, 449–469, and 477–497; these read FLLL…VLVG, GGLL…ALYA, LLLM…LLLF, LLLG…LAAL, FLDA…FFAV, LLMH…VGEP, QVAP…VLLE, VLIV…LLVI, FQEA…VAVI, MLFI…VATI, VATP…IAPL, and MVWM…WAVS.

This sequence belongs to the NhaB Na(+)/H(+) (TC 2.A.34) antiporter family.

The protein resides in the cell inner membrane. It catalyses the reaction 2 Na(+)(in) + 3 H(+)(out) = 2 Na(+)(out) + 3 H(+)(in). In terms of biological role, na(+)/H(+) antiporter that extrudes sodium in exchange for external protons. This Pseudomonas aeruginosa (strain UCBPP-PA14) protein is Na(+)/H(+) antiporter NhaB.